A 245-amino-acid chain; its full sequence is Pathogenesis-related thaumatin-like protein 3.6 (245 aa).

The N-terminal stretch at 1–19 is a signal peptide; sequence GSIPFWIALIASFSVFLQG. Intrachain disulfides connect C33–C226, C74–C84, C89–C95, C142–C215, C148–C198, C156–C166, C170–C179, and C180–C185. An N-linked (GlcNAc...) asparagine glycan is attached at N90. N186 is a glycosylation site (N-linked (GlcNAc...) asparagine).

The protein belongs to the thaumatin family. As to expression, mostly expressed in strobili, and, to a lower extent, in roots of seedlings and saplings.

May be involved in disease resistance. In Cryptomeria japonica (Japanese cedar), this protein is Pathogenesis-related thaumatin-like protein 3.6.